Here is a 68-residue protein sequence, read N- to C-terminus: Protein SlyX homolog (68 aa).

It belongs to the SlyX family.

This Pseudomonas entomophila (strain L48) protein is Protein SlyX homolog.